Reading from the N-terminus, the 64-residue chain is Large ribosomal subunit protein bL28 (64 aa).

Belongs to the bacterial ribosomal protein bL28 family.

The protein is Large ribosomal subunit protein bL28 (rpmB) of Mycobacterium leprae (strain TN).